The following is a 212-amino-acid chain: MADSIEDAVSRAMSESPERNFRETVDLAINLRDLDLADPNNRVDESIVLPSGTGQDTHIVVFAEGETALRAEDVADDVLDSDDLEDLGDDDNAAKDLADETDFFIAEADLMQDIGRYLGTVLGPRGKMPTPLQPDDDVVETVNRMKNTVQVRSGERRTFHTRVGAEDMDADAIADNVDVILRRLFTDLEKGPQNIDTVYVKTTMGPAVEVPA.

Belongs to the universal ribosomal protein uL1 family. In terms of assembly, part of the 50S ribosomal subunit.

In terms of biological role, binds directly to 23S rRNA. Probably involved in E site tRNA release. Its function is as follows. Protein L1 is also a translational repressor protein, it controls the translation of its operon by binding to its mRNA. This is Large ribosomal subunit protein uL1 from Natronomonas pharaonis (strain ATCC 35678 / DSM 2160 / CIP 103997 / JCM 8858 / NBRC 14720 / NCIMB 2260 / Gabara) (Halobacterium pharaonis).